The sequence spans 239 residues: EALYDICFRTLKLVTPTFGDLNHLISATMSGVTCCLRFPGQLNSDLRKLAVNLIPFPRLHFFMVGFAPLTSRGSQQYRALTVPELTQQMWDAKNMMCAADPRHGRYLTASAMFRGKMSTKEVDEQLINVQNKNSSYFVEWIPNNVKSSVCDIPPVGLKMACTFIGNSSSIQEMFRRDATSLTAMFRRKAFLHWYTWEGMDEMEFTEEESNMNDLVSEYQQYQDASAEPXXEQEEDYEEA.

Asn22 is a GTP binding site. Residues 207-239 are disordered; it reads EESNMNDLVSEYQQYQDASAEPXXEQEEDYEEA. A compositionally biased stretch (acidic residues) spans 230–239; the sequence is XEQEEDYEEA.

The protein belongs to the tubulin family. As to quaternary structure, dimer of alpha and beta chains. A typical microtubule is a hollow water-filled tube with an outer diameter of 25 nm and an inner diameter of 15 nM. Alpha-beta heterodimers associate head-to-tail to form protofilaments running lengthwise along the microtubule wall with the beta-tubulin subunit facing the microtubule plus end conferring a structural polarity. Microtubules usually have 13 protofilaments but different protofilament numbers can be found in some organisms and specialized cells. The cofactor is Mg(2+).

Its subcellular location is the cytoplasm. The protein resides in the cytoskeleton. Functionally, tubulin is the major constituent of microtubules, a cylinder consisting of laterally associated linear protofilaments composed of alpha- and beta-tubulin heterodimers. Microtubules grow by the addition of GTP-tubulin dimers to the microtubule end, where a stabilizing cap forms. Below the cap, tubulin dimers are in GDP-bound state, owing to GTPase activity of alpha-tubulin. This is Tubulin beta-3 chain (TUBB3) from Anemia phyllitidis (Fern).